We begin with the raw amino-acid sequence, 1318 residues long: MSDEASETGQRYNGQPILKRQKPILPYICSTLDFQEERDFLAKSIFPRLNDICSSRGTYFKAVDLRWSAVKAHKSFTSNQFRQYSCLQSQHLKLSLDYVNRCFPFFIGLLGQTYGDFLPDYTPFLLSQVKDFESLSKGKKNLYIAAKNGYPWVLKTPNCSLTEFEIIQAVFRKKSQFQFFYFRTSNSLLRTFNEEEEEEEEKLSSAYLLNEQGKMKVGKLKAKIIGKGLPVRFYRDLEELGDMVWKDWSAVVEKLYPFTTIMGNIDYKHSFENLYHEEFVENCKQVFVTSKESNRTFEILERFAIKDLDLDLDTDSTIAGSGLDSILRINSLPTCKSILLLSGERGCGKSTLIANWVSNFQSKHPGVLMIPYFVGSTCESCDIMSVIHYFVMELQHRANGPRLEMDFLNEDSNVLVFSLLVEVFIAAISLKPCILVLDGIEELIGIYGISGQKAKDFSWLPRSLPPHCKFILSSVSSSLSCKSLCARPDVKIVELNSIGDEDTKFNIFRQHLSPADQERFGQSKPILRKKPNLSPLKLAIIASELQECKIYRNEFQCLREYLEVASVQELWELILKRWVEDYSWTLKPKDTTLDTVIPGPSGWVVDVLCLLCISHCGLAEDELLQLLDTMGYRDHHKVTAVHWAAFRQATKTWIQEKPNGLLYFQHQSLRSAVEHKLLGVSTPVRESNPNVAQNSVNHKKAHFHQVLMRFFQRQTIFWRVYQELPWHMKMSGYWEGLCNFITNPSITDFISKIQNPSLWTRLHLVHYWDVLLEAGNDVSEAFLLSVAKIEGEQFQKLKKRTTLSVLECSLSEITAADKGRIILFIGSFLKLMGKINEAEKLFLSAEDLLLQSPSMTEMLLRAQNAIGELYLEIGMTPKGLTYFQKAWSNLLRFTLSDLKISQELMKQKVKVMNNLAESAPGEFLKENHVLEYATEISKYVTGNPRDHATMKYTEGVLMLASGNAALAKLKFQECLTIRRWLFGNKNILVGEIMEFLADLLFFLLGENEKSQKKQAIEYYKQVIKIKEKADTVATCKLVRKHLSISLSDTLCKLAGQLLSGDFCHHATMEAVSYLYRSLDLRAAHLGPTHASIEGILHLLREIQRSRGRRSWPQSMNHLFPNGSRNGFSLWENVPKLNFHSAQSSDTVNTAMCMNIRRFQRVKSTQPSLVSDKPKYVPGKGKKTLAPILCKSAEEKFQRQASDSQIWNSPRRQPARKKAACPLKTVSLIDKNGLVRLSRQSVSSAELDSRKGLITSICRQPLQRPHNVDNPWKSISELVSEKWLFHTPQYCFTPQKPGFPRRSQIESKLLKTSDDPNKE.

TPR repeat units lie at residues 401–434 (PRLE…KPCI), 653–686 (WIQE…PVRE), 819–852 (GRII…LLQS), 860–893 (LRAQ…LLRF), 993–1029 (MEFL…KEKA), and 1047–1084 (SDTL…RAAH). The segment at 1295–1318 (KPGFPRRSQIESKLLKTSDDPNKE) is disordered. The span at 1302–1318 (SQIESKLLKTSDDPNKE) shows a compositional bias: basic and acidic residues.

As to expression, highly expressed in lung and myeloid leukemia cell line (at protein level). Isoform 4: expressed in heart (at protein level).

It is found in the cytoplasm. This chain is Tetratricopeptide repeat protein 41, found in Mus musculus (Mouse).